The chain runs to 217 residues: Somatotropin (217 aa).

The first 26 residues, Met1–Ala26, serve as a signal peptide directing secretion. His46 contributes to the Zn(2+) binding site. Cys79 and Cys190 are oxidised to a cystine. Glu199 is a binding site for Zn(2+). Cys207 and Cys215 are oxidised to a cystine.

This sequence belongs to the somatotropin/prolactin family.

The protein resides in the secreted. Functionally, growth hormone plays an important role in growth control. This Struthio camelus (Common ostrich) protein is Somatotropin (GH).